Reading from the N-terminus, the 192-residue chain is UPF0312 protein PSPTO_5071 (192 aa).

Positions 1 to 23 are cleaved as a signal peptide; the sequence is MLKKSLAALALGTALLSAGQAMA.

This sequence belongs to the UPF0312 family. Type 1 subfamily.

It localises to the periplasm. This chain is UPF0312 protein PSPTO_5071, found in Pseudomonas syringae pv. tomato (strain ATCC BAA-871 / DC3000).